The sequence spans 810 residues: Type I restriction enzyme EcoAI endonuclease subunit (810 aa).

One can recognise a Helicase ATP-binding domain in the interval 183–343 (EAVSNGQNRV…TDYFGDPVYV (161 aa)). 197 to 203 (ATGTGKT) lines the ATP pocket. Residues 412–575 (TITDYLKRTN…DIADPESDFE (164 aa)) enclose the Helicase C-terminal domain. Over residues 578–588 (LEEISEHDEEQ) the composition is skewed to acidic residues. A disordered region spans residues 578-608 (LEEISEHDEEQVTGVDEPPAPPYQVTDTDDV).

It belongs to the HsdR family. In terms of assembly, the type I restriction/modification system is composed of three polypeptides R, M and S. The restriction enzyme has stoichiometry R(2)M(2)S(1) while the methyltransferase is M(2)S(1).

The enzyme catalyses Endonucleolytic cleavage of DNA to give random double-stranded fragments with terminal 5'-phosphates, ATP is simultaneously hydrolyzed.. Functionally, the subtype B restriction (R) subunit of a type I restriction enzyme that recognizes 5'-GAGN(7)GTCA-3' and cleaves a random distance away. Subunit R is required for both nuclease and ATPase activities, but not for modification. After locating a non-methylated recognition site, the enzyme complex serves as a molecular motor that translocates DNA in an ATP-dependent manner until a collision occurs that triggers cleavage. In Escherichia coli, this protein is Type I restriction enzyme EcoAI endonuclease subunit.